The following is an 84-amino-acid chain: UPF0297 protein NT01CX_2279 (84 aa).

This sequence belongs to the UPF0297 family.

The polypeptide is UPF0297 protein NT01CX_2279 (Clostridium novyi (strain NT)).